The chain runs to 531 residues: RCC1 and BTB domain-containing protein 1 (531 aa).

RCC1 repeat units follow at residues 40 to 91 (NDEV…LLTT), 93 to 145 (DGVV…ALAA), 147 to 198 (GELF…AVLD), 199 to 250 (SGEV…ALTD), 252 to 302 (GLLY…AAKT), and 304 to 356 (GGHV…FLTV). BTB domains follow at residues 370-437 (ADLK…DLPP) and 470-499 (ENAFSLFSAAVRYDAEDLEEFCFKFCINHL).

As to expression, in the retina, mainly expressed in the inner retina with strong signals reaching up to the outer plexiform layer (at protein level).

The protein localises to the nucleus. May be involved in cell cycle regulation by chromatin remodeling. The polypeptide is RCC1 and BTB domain-containing protein 1 (Rcbtb1) (Mus musculus (Mouse)).